A 261-amino-acid polypeptide reads, in one-letter code: Ribosomal RNA small subunit methyltransferase J (261 aa).

Residues 111–112, 127–128, 163–164, and Asp181 contribute to the S-adenosyl-L-methionine site; these read RD, ER, and SS.

Belongs to the methyltransferase superfamily. RsmJ family.

It is found in the cytoplasm. It catalyses the reaction guanosine(1516) in 16S rRNA + S-adenosyl-L-methionine = N(2)-methylguanosine(1516) in 16S rRNA + S-adenosyl-L-homocysteine + H(+). In terms of biological role, specifically methylates the guanosine in position 1516 of 16S rRNA. This chain is Ribosomal RNA small subunit methyltransferase J, found in Shewanella sp. (strain ANA-3).